Here is a 380-residue protein sequence, read N- to C-terminus: Glucose-1-phosphate adenylyltransferase (380 aa).

Residues glycine 164, glutamate 179–lysine 180, and serine 190 each bind alpha-D-glucose 1-phosphate.

It belongs to the bacterial/plant glucose-1-phosphate adenylyltransferase family. Homotetramer.

It catalyses the reaction alpha-D-glucose 1-phosphate + ATP + H(+) = ADP-alpha-D-glucose + diphosphate. It participates in glycan biosynthesis; glycogen biosynthesis. In terms of biological role, involved in the biosynthesis of ADP-glucose, a building block required for the elongation reactions to produce glycogen. Catalyzes the reaction between ATP and alpha-D-glucose 1-phosphate (G1P) to produce pyrophosphate and ADP-Glc. The chain is Glucose-1-phosphate adenylyltransferase from Streptococcus pneumoniae (strain 70585).